The following is a 176-amino-acid chain: Flavodoxin 1 (176 aa).

Residues 4–165 enclose the Flavodoxin-like domain; sequence TGIFFGSDTG…RVEKWVKQVS (162 aa).

It belongs to the flavodoxin family. FMN is required as a cofactor.

Its function is as follows. Low-potential electron donor to a number of redox enzymes (Potential). Involved in the reactivation of inactive cob(II)alamin in methionine synthase. This Salmonella typhimurium (strain LT2 / SGSC1412 / ATCC 700720) protein is Flavodoxin 1 (fldA).